The chain runs to 490 residues: Glutamate--tRNA ligase (490 aa).

The 'HIGH' region motif lies at 13 to 23; that stretch reads PSPTGTPHVGL. The short motif at 257 to 261 is the 'KMSKS' region element; sequence KLSKR. Lys260 is an ATP binding site.

Belongs to the class-I aminoacyl-tRNA synthetase family. Glutamate--tRNA ligase type 1 subfamily. In terms of assembly, monomer.

It is found in the cytoplasm. The catalysed reaction is tRNA(Glu) + L-glutamate + ATP = L-glutamyl-tRNA(Glu) + AMP + diphosphate. In terms of biological role, catalyzes the attachment of glutamate to tRNA(Glu) in a two-step reaction: glutamate is first activated by ATP to form Glu-AMP and then transferred to the acceptor end of tRNA(Glu). The polypeptide is Glutamate--tRNA ligase (Mycobacterium bovis (strain BCG / Pasteur 1173P2)).